Consider the following 270-residue polypeptide: MAAVGRYSGKVVVVTGGSRGIGAAIVRAFVDSGAQVVFCDKDEAGGRAVEQELLGTVFIPGDVTQEGDLQTLISETVSRFGHLDCVVNNAGYHPPAQLPEETSAQGFRQLLEENLLGAYTLIKLALPHLRKSKGNIINISSLVGAIGQSQALTYVATKGAVTAMTKALALDESRYGVRVNCISPGNIWTPLWQELAAATSDPRATILEGTLAQPLGRMGQPAEVGAAAVFLASEATFCTGLELFMTGGAELGYGRKASSSTLVEVPILPP.

R19, I21, D40, K41, D62, V63, N89, Y154, K158, I187, T189, and L191 together coordinate NAD(+).

This sequence belongs to the short-chain dehydrogenases/reductases (SDR) family.

It catalyses the reaction L-fucose + NAD(+) = L-fucono-1,5-lactone + NADH + H(+). The enzyme catalyses D-arabinose + NAD(+) = D-arabinono-1,5-lactone + NADH + H(+). The catalysed reaction is L-galactose + NAD(+) = L-galactono-1,5-lactone + NADH + H(+). In terms of biological role, catalyzes the NAD(+)-dependent oxidation of L-fucose, yielding L-fucono-1,5-lactone, which rapidly converts spontaneously to L-fucone-1,4-lactone. Does not use NADPH. Displays low activity on L-fucose, D-arabinose and L-galactose compared with rabbit and human. This is consitent with the low L-fucose metabolism observed in this species. This is L-fucose dehydrogenase (Hsd17b14) from Rattus norvegicus (Rat).